We begin with the raw amino-acid sequence, 800 residues long: N,N'-diacetylchitobiose phosphorylase (800 aa).

6 residues coordinate N-acetyl-alpha-D-glucosamine 1-phosphate: R333, R343, R349, D350, W490, and D492. D492 (proton donor) is an active-site residue. N-acetyl-D-glucosamine is bound by residues D492, K636, and E637. Positions 637, 644, 690, 709, and 710 each coordinate N-acetyl-alpha-D-glucosamine 1-phosphate.

This sequence belongs to the glycosyl hydrolase 94 family. Homodimer.

The catalysed reaction is N,N'-diacetylchitobiose + phosphate = N-acetyl-alpha-D-glucosamine 1-phosphate + N-acetyl-D-glucosamine. Its function is as follows. Catalyzes the reversible phosphorolysis of chitobiose (N,N'-diacetylchitobiose or (GlcNAc)(2)) into N-acetyl-alpha-D-glucosamine 1-phosphate (GlcNAc-1-P) and N-acetyl-D-glucosamine (GlcNAc) with inversion of the anomeric configuration. This chain is N,N'-diacetylchitobiose phosphorylase, found in Vibrio furnissii.